The sequence spans 228 residues: uncharacterized protein (228 aa).

It to E.coli YbfG.

This is an uncharacterized protein from Haemophilus influenzae (strain ATCC 51907 / DSM 11121 / KW20 / Rd).